Here is a 175-residue protein sequence, read N- to C-terminus: Cyclic pyranopterin monophosphate synthase (175 aa).

Substrate is bound by residues 78–80 (LCH) and 125–126 (ME). Aspartate 140 is an active-site residue.

It belongs to the MoaC family. As to quaternary structure, homohexamer; trimer of dimers.

The catalysed reaction is (8S)-3',8-cyclo-7,8-dihydroguanosine 5'-triphosphate = cyclic pyranopterin phosphate + diphosphate. It participates in cofactor biosynthesis; molybdopterin biosynthesis. In terms of biological role, catalyzes the conversion of (8S)-3',8-cyclo-7,8-dihydroguanosine 5'-triphosphate to cyclic pyranopterin monophosphate (cPMP). This is Cyclic pyranopterin monophosphate synthase from Rhodopirellula baltica (strain DSM 10527 / NCIMB 13988 / SH1).